The primary structure comprises 362 residues: 3-dehydroquinate synthase (362 aa).

Residues 74–79 (DGEGYK), 108–112 (GVIGD), 132–133 (TT), lysine 145, lysine 154, and 172–175 (TLDT) each bind NAD(+). Zn(2+) is bound by residues glutamate 187, histidine 250, and histidine 267.

This sequence belongs to the sugar phosphate cyclases superfamily. Dehydroquinate synthase family. Requires Co(2+) as cofactor. Zn(2+) is required as a cofactor. It depends on NAD(+) as a cofactor.

It localises to the cytoplasm. It catalyses the reaction 7-phospho-2-dehydro-3-deoxy-D-arabino-heptonate = 3-dehydroquinate + phosphate. Its pathway is metabolic intermediate biosynthesis; chorismate biosynthesis; chorismate from D-erythrose 4-phosphate and phosphoenolpyruvate: step 2/7. Functionally, catalyzes the conversion of 3-deoxy-D-arabino-heptulosonate 7-phosphate (DAHP) to dehydroquinate (DHQ). The sequence is that of 3-dehydroquinate synthase from Geobacter sp. (strain M21).